The primary structure comprises 272 residues: Heat stress transcription factor A-7a (272 aa).

Residues 1 to 26 form a disordered region; sequence MMNPFLPEGCDPPPPPQPMEGLHENA. A DNA-binding region spans residues 27–121; the sequence is PPPFLTKTFE…LLKNIKRRNP (95 aa). The hydrophobic repeat HR-A/B stretch occupies residues 132-186; sequence ACNELRREKQVLMMEIVSLRQQQQTTKSYIKAMEQRIEGTERKQRQMMSFLARAM. The Bipartite nuclear localization signal motif lies at 201–216; that stretch reads KKIKELEDNESAKRKR. Positions 203-212 are enriched in basic and acidic residues; sequence IKELEDNESA. The interval 203–223 is disordered; it reads IKELEDNESAKRKRGSSSMSE. The AHA signature appears at 256 to 265; it reads DGFWEELLSD.

The protein belongs to the HSF family. Class A subfamily. Homotrimer. Exhibits temperature-dependent phosphorylation.

It localises to the nucleus. Its function is as follows. Transcriptional activator that specifically binds DNA sequence 5'-AGAAnnTTCT-3' known as heat shock promoter elements (HSE). The chain is Heat stress transcription factor A-7a (HSFA7A) from Arabidopsis thaliana (Mouse-ear cress).